Reading from the N-terminus, the 179-residue chain is Large ribosomal subunit protein uL5 (179 aa).

This sequence belongs to the universal ribosomal protein uL5 family. In terms of assembly, part of the 50S ribosomal subunit; part of the 5S rRNA/L5/L18/L25 subcomplex. Contacts the 5S rRNA and the P site tRNA. Forms a bridge to the 30S subunit in the 70S ribosome.

This is one of the proteins that bind and probably mediate the attachment of the 5S RNA into the large ribosomal subunit, where it forms part of the central protuberance. In the 70S ribosome it contacts protein S13 of the 30S subunit (bridge B1b), connecting the 2 subunits; this bridge is implicated in subunit movement. Contacts the P site tRNA; the 5S rRNA and some of its associated proteins might help stabilize positioning of ribosome-bound tRNAs. The sequence is that of Large ribosomal subunit protein uL5 from Xylella fastidiosa (strain M23).